Reading from the N-terminus, the 313-residue chain is Aspartate carbamoyltransferase catalytic subunit (313 aa).

Carbamoyl phosphate is bound by residues Arg-53 and Thr-54. An L-aspartate-binding site is contributed by Lys-82. Arg-103, His-131, and Gln-134 together coordinate carbamoyl phosphate. Residues Arg-163 and Arg-224 each contribute to the L-aspartate site. Carbamoyl phosphate-binding residues include Leu-263 and Pro-264.

It belongs to the aspartate/ornithine carbamoyltransferase superfamily. ATCase family. As to quaternary structure, heterooligomer of catalytic and regulatory chains.

The catalysed reaction is carbamoyl phosphate + L-aspartate = N-carbamoyl-L-aspartate + phosphate + H(+). It participates in pyrimidine metabolism; UMP biosynthesis via de novo pathway; (S)-dihydroorotate from bicarbonate: step 2/3. Its function is as follows. Catalyzes the condensation of carbamoyl phosphate and aspartate to form carbamoyl aspartate and inorganic phosphate, the committed step in the de novo pyrimidine nucleotide biosynthesis pathway. The chain is Aspartate carbamoyltransferase catalytic subunit from Halorubrum lacusprofundi (strain ATCC 49239 / DSM 5036 / JCM 8891 / ACAM 34).